The following is a 50-amino-acid chain: Defensin D4 (50 aa).

Cystine bridges form between Cys3-Cys50, Cys14-Cys35, Cys20-Cys44, and Cys24-Cys46.

As to expression, detected in seeds (at protein level).

The protein localises to the secreted. In terms of biological role, antimicrobial peptide with antifungal activity. This is Defensin D4 from Nigella sativa (Black cumin).